Here is a 529-residue protein sequence, read N- to C-terminus: Probable threonine/serine exporter (529 aa).

10 helical membrane-spanning segments follow: residues 88 to 108, 168 to 188, 212 to 232, 234 to 254, 265 to 285, 312 to 332, 344 to 364, 365 to 385, 389 to 409, and 428 to 448; these read ITVT…PVTI, FALG…LAAV, VFGA…AGQD, TALV…VGSM, ALAR…GILI, MPLP…CLTI, AGLS…AGFG, RVVA…LISI, APAL…LAVF, and LLEA…GEFL. The disordered stretch occupies residues 482 to 501; it reads QPAKSQQPTGTGGQRWRSVA.

It belongs to the ThrE exporter (TC 2.A.79) family.

Its subcellular location is the cell membrane. The enzyme catalyses L-threonine(in) + H(+)(out) = L-threonine(out) + H(+)(in). Its function is as follows. Catalyzes the export of L-threonine and L-serine from the cell to the extracellular environment. Export is dependent on the proton motive force. Required for in vitro growth and survival of bacteria inside macrophages. Increased expression is associated with low-level amikacin (AMK) resistance. The sequence is that of Probable threonine/serine exporter from Mycobacterium tuberculosis (strain ATCC 25618 / H37Rv).